The sequence spans 814 residues: Acyl-coenzyme A dehydrogenase (814 aa).

The Proton acceptor role is filled by Glu497.

It belongs to the acyl-CoA dehydrogenase family. FAD is required as a cofactor.

It carries out the reaction a medium-chain 2,3-saturated fatty acyl-CoA + oxidized [electron-transfer flavoprotein] + H(+) = a medium-chain (2E)-enoyl-CoA + reduced [electron-transfer flavoprotein]. The enzyme catalyses a long-chain 2,3-saturated fatty acyl-CoA + oxidized [electron-transfer flavoprotein] + H(+) = a long-chain (2E)-enoyl-CoA + reduced [electron-transfer flavoprotein]. It participates in lipid metabolism; fatty acid beta-oxidation. In terms of biological role, catalyzes the dehydrogenation of acyl-coenzymes A (acyl-CoAs) to 2-enoyl-CoAs, the first step of the beta-oxidation cycle of fatty acid degradation. Is required for the utilization of medium- and long-chain fatty acids as sole carbon sources for growth. Is needed for bacterial survival during carbone-source starvation. This Salmonella typhi protein is Acyl-coenzyme A dehydrogenase (fadE).